Consider the following 147-residue polypeptide: Protein MC014 (147 aa).

Its subcellular location is the host nucleus. This chain is Protein MC014 (MC014), found in Homo sapiens (Human).